Consider the following 457-residue polypeptide: Adenylosuccinate synthetase (457 aa).

GTP contacts are provided by residues Gly40–Lys46 and Gly70–Thr72. The Proton acceptor role is filled by Asp41. The Mg(2+) site is built by Asp41 and Gly70. Residues Asp41 to Lys44, Asn68 to His71, Thr161, Arg175, Asn255, Thr270, and Arg334 contribute to the IMP site. The active-site Proton donor is His71. Val330–Arg336 is a substrate binding site. Residues Arg336, Lys362–Asp364, and Gly444–Gly446 each bind GTP.

This sequence belongs to the adenylosuccinate synthetase family. In terms of assembly, homodimer. Requires Mg(2+) as cofactor.

The protein localises to the cytoplasm. It catalyses the reaction IMP + L-aspartate + GTP = N(6)-(1,2-dicarboxyethyl)-AMP + GDP + phosphate + 2 H(+). Its pathway is purine metabolism; AMP biosynthesis via de novo pathway; AMP from IMP: step 1/2. In terms of biological role, plays an important role in the de novo pathway and in the salvage pathway of purine nucleotide biosynthesis. Catalyzes the first committed step in the biosynthesis of AMP from IMP. This chain is Adenylosuccinate synthetase, found in Caenorhabditis elegans.